Here is an 878-residue protein sequence, read N- to C-terminus: Serine/threonine-protein kinase N3 (878 aa).

REM-1 domains are found at residues 2-77, 86-165, and 169-238; these read EHRK…QVLL, SEPQ…SGSP, and PDLL…RLPP. Ser-164 carries the post-translational modification Phosphoserine. Positions 461 to 525 are disordered; sequence PNTASPPKGR…TPCTKRPHMD (65 aa). The 260-residue stretch at 548–807 folds into the Protein kinase domain; the sequence is FRCLAVLGRG…AEEIKVQPFF (260 aa). Residues 554–562 and Lys-577 contribute to the ATP site; that span reads LGRGHFGKV. Residue Asp-673 is the Proton acceptor of the active site. Thr-707, Thr-711, and Thr-849 each carry phosphothreonine. The AGC-kinase C-terminal domain occupies 808-878; the sequence is RTTNWQALLA…DFVSEQFLES (71 aa).

Belongs to the protein kinase superfamily. AGC Ser/Thr protein kinase family. PKC subfamily. In terms of processing, autophosphorylated.

The protein localises to the nucleus. It is found in the cytoplasm. It localises to the perinuclear region. It carries out the reaction L-seryl-[protein] + ATP = O-phospho-L-seryl-[protein] + ADP + H(+). The enzyme catalyses L-threonyl-[protein] + ATP = O-phospho-L-threonyl-[protein] + ADP + H(+). Two specific sites, Thr-707 (activation loop of the kinase domain) and Thr-849 (turn motif), need to be phosphorylated for its full activation. In terms of biological role, contributes to invasiveness in malignant prostate cancer. The chain is Serine/threonine-protein kinase N3 (Pkn3) from Mus musculus (Mouse).